The chain runs to 206 residues: Type III pantothenate kinase (206 aa).

5 to 12 (DIGNTFLH) lines the ATP pocket. Substrate-binding positions include Tyr-69 and 73–76 (GVDR). Residue Asp-75 is the Proton acceptor of the active site. Asp-90 is a binding site for K(+). Ser-93 is a binding site for ATP. Substrate is bound at residue Thr-145.

This sequence belongs to the type III pantothenate kinase family. In terms of assembly, homodimer. NH4(+) is required as a cofactor. It depends on K(+) as a cofactor.

The protein localises to the cytoplasm. The enzyme catalyses (R)-pantothenate + ATP = (R)-4'-phosphopantothenate + ADP + H(+). It participates in cofactor biosynthesis; coenzyme A biosynthesis; CoA from (R)-pantothenate: step 1/5. Functionally, catalyzes the phosphorylation of pantothenate (Pan), the first step in CoA biosynthesis. This Helicobacter hepaticus (strain ATCC 51449 / 3B1) protein is Type III pantothenate kinase.